The following is a 311-amino-acid chain: Large ribosomal subunit protein uL22 (311 aa).

It belongs to the universal ribosomal protein uL22 family. Part of the 50S ribosomal subunit.

Its function is as follows. This protein binds specifically to 23S rRNA; its binding is stimulated by other ribosomal proteins, e.g. L4, L17, and L20. It is important during the early stages of 50S assembly. It makes multiple contacts with different domains of the 23S rRNA in the assembled 50S subunit and ribosome. Functionally, the globular domain of the protein is located near the polypeptide exit tunnel on the outside of the subunit, while an extended beta-hairpin is found that lines the wall of the exit tunnel in the center of the 70S ribosome. The polypeptide is Large ribosomal subunit protein uL22 (rplV) (Ureaplasma parvum serovar 3 (strain ATCC 27815 / 27 / NCTC 11736)).